A 79-amino-acid chain; its full sequence is NADH-ubiquinone oxidoreductase chain 4 (79 aa).

2 helical membrane passes run 24 to 44 (SYTL…LANI) and 54 to 74 (LLIN…WFLL).

The protein belongs to the complex I subunit 4 family.

Its subcellular location is the mitochondrion membrane. The enzyme catalyses a ubiquinone + NADH + 5 H(+)(in) = a ubiquinol + NAD(+) + 4 H(+)(out). In terms of biological role, core subunit of the mitochondrial membrane respiratory chain NADH dehydrogenase (Complex I) that is believed to belong to the minimal assembly required for catalysis. Complex I functions in the transfer of electrons from NADH to the respiratory chain. The immediate electron acceptor for the enzyme is believed to be ubiquinone. This chain is NADH-ubiquinone oxidoreductase chain 4 (ND4), found in Simulium vittatum (Striped black fly).